Reading from the N-terminus, the 153-residue chain is UPF0311 protein Rpal_1987 (153 aa).

This sequence belongs to the UPF0311 family.

This is UPF0311 protein Rpal_1987 from Rhodopseudomonas palustris (strain TIE-1).